Reading from the N-terminus, the 161-residue chain is Lipoprotein signal peptidase (161 aa).

3 consecutive transmembrane segments (helical) span residues 4-24, 61-81, and 87-107; these read LLVV…WSKY, KMIF…YLLI, and SIWY…NFID. Residues aspartate 116 and aspartate 132 contribute to the active site. The helical transmembrane segment at 127 to 147 threads the bilayer; that stretch reads IFNVADSTLVVGVICIFIYLI.

This sequence belongs to the peptidase A8 family.

It is found in the cell membrane. The catalysed reaction is Release of signal peptides from bacterial membrane prolipoproteins. Hydrolyzes -Xaa-Yaa-Zaa-|-(S,diacylglyceryl)Cys-, in which Xaa is hydrophobic (preferably Leu), and Yaa (Ala or Ser) and Zaa (Gly or Ala) have small, neutral side chains.. The protein operates within protein modification; lipoprotein biosynthesis (signal peptide cleavage). Functionally, this protein specifically catalyzes the removal of signal peptides from prolipoproteins. The polypeptide is Lipoprotein signal peptidase (Enterococcus faecalis (strain ATCC 700802 / V583)).